Here is a 430-residue protein sequence, read N- to C-terminus: GTPase Obg (430 aa).

The Obg domain occupies 1–158 (MFVDQVKISL…LDVSLELKLL (158 aa)). The segment at 118–145 (KGGRGGRGNSRFATPRNPAPDFSEKGEP) is disordered. One can recognise an OBG-type G domain in the interval 159 to 329 (ADVGLVGFPS…LLYAIADKLE (171 aa)). GTP is bound by residues 165–172 (GFPSVGKS), 190–194 (FTTIK), 212–215 (DLPG), 282–285 (NKMD), and 310–312 (STI). Residues Ser172 and Thr192 each contribute to the Mg(2+) site. One can recognise an OCT domain in the interval 352–430 (KHTPSQDKFT…ILGGEFEFVE (79 aa)).

This sequence belongs to the TRAFAC class OBG-HflX-like GTPase superfamily. OBG GTPase family. Monomer. Mg(2+) serves as cofactor.

The protein resides in the cytoplasm. Its function is as follows. An essential GTPase which binds GTP, GDP and possibly (p)ppGpp with moderate affinity, with high nucleotide exchange rates and a fairly low GTP hydrolysis rate. Plays a role in control of the cell cycle, stress response, ribosome biogenesis and in those bacteria that undergo differentiation, in morphogenesis control. In Staphylococcus aureus (strain COL), this protein is GTPase Obg.